The sequence spans 299 residues: MTTKHELVINTNEPSAPNADSFYPSYSNETSFSPQYQRDFSGFSGGGMIGEKMATRYEGRTLPRDSLMMIESQSPLNHRKTDFNDKTKTLPVYKNGGYPNLETFKVSRRETDEEEEHFKDYKINKISEYIKYLDTEIKDRERLKKNYGKLDKTLFGVECSCMITELGVTGTSFFIPPMVVISTPICLGLTVFSTVLRNGSKLITKKIDKHAHIELLAKSKRNSIDEKYTKAMEDGVISESEFQDIRKEIYNYDEMKKSILNQFKNNSQAIELTKEAQLTLINKGKEEMKEEFKIKLNKL.

A disordered region spans residues 1-20 (MTTKHELVINTNEPSAPNAD). A helical membrane pass occupies residues 172–192 (SFFIPPMVVISTPICLGLTVF).

Belongs to the IIV-6 259R family.

It localises to the membrane. This is an uncharacterized protein from Acheta domesticus (House cricket).